Here is a 342-residue protein sequence, read N- to C-terminus: tRNA dimethylallyltransferase (342 aa).

Residue 39-46 coordinates ATP; sequence GPTGSGKT. 41–46 is a substrate binding site; sequence TGSGKT. The tract at residues 64 to 67 is interaction with substrate tRNA; the sequence is DSMQ.

Belongs to the IPP transferase family. In terms of assembly, monomer. It depends on Mg(2+) as a cofactor.

It carries out the reaction adenosine(37) in tRNA + dimethylallyl diphosphate = N(6)-dimethylallyladenosine(37) in tRNA + diphosphate. Functionally, catalyzes the transfer of a dimethylallyl group onto the adenine at position 37 in tRNAs that read codons beginning with uridine, leading to the formation of N6-(dimethylallyl)adenosine (i(6)A). The protein is tRNA dimethylallyltransferase of Chlamydia caviae (strain ATCC VR-813 / DSM 19441 / 03DC25 / GPIC) (Chlamydophila caviae).